A 424-amino-acid chain; its full sequence is Protein SamB (424 aa).

Residues 2–189 form the UmuC domain; sequence FALADVNSFY…QPVEEIWGVG (188 aa).

The protein belongs to the DNA polymerase type-Y family.

Involved in UV protection and mutation. The protein is Protein SamB (samB) of Salmonella typhimurium.